Consider the following 370-residue polypeptide: UDP-N-acetylglucosamine--N-acetylmuramyl-(pentapeptide) pyrophosphoryl-undecaprenol N-acetylglucosamine transferase (370 aa).

UDP-N-acetyl-alpha-D-glucosamine contacts are provided by residues 20–22 (TAG), asparagine 134, arginine 170, serine 204, isoleucine 257, and glutamine 301.

It belongs to the glycosyltransferase 28 family. MurG subfamily.

Its subcellular location is the cell membrane. It carries out the reaction di-trans,octa-cis-undecaprenyl diphospho-N-acetyl-alpha-D-muramoyl-L-alanyl-D-glutamyl-meso-2,6-diaminopimeloyl-D-alanyl-D-alanine + UDP-N-acetyl-alpha-D-glucosamine = di-trans,octa-cis-undecaprenyl diphospho-[N-acetyl-alpha-D-glucosaminyl-(1-&gt;4)]-N-acetyl-alpha-D-muramoyl-L-alanyl-D-glutamyl-meso-2,6-diaminopimeloyl-D-alanyl-D-alanine + UDP + H(+). It participates in cell wall biogenesis; peptidoglycan biosynthesis. Functionally, cell wall formation. Catalyzes the transfer of a GlcNAc subunit on undecaprenyl-pyrophosphoryl-MurNAc-pentapeptide (lipid intermediate I) to form undecaprenyl-pyrophosphoryl-MurNAc-(pentapeptide)GlcNAc (lipid intermediate II). The protein is UDP-N-acetylglucosamine--N-acetylmuramyl-(pentapeptide) pyrophosphoryl-undecaprenol N-acetylglucosamine transferase of Corynebacterium jeikeium (strain K411).